Consider the following 192-residue polypeptide: Transcription termination/antitermination protein NusG (192 aa).

Positions 140-168 (VGEIVIVTDGPFETFTGTVEEIDQEKNRL) constitute a KOW domain.

The protein belongs to the NusG family.

In terms of biological role, participates in transcription elongation, termination and antitermination. The sequence is that of Transcription termination/antitermination protein NusG from Rickettsia felis (strain ATCC VR-1525 / URRWXCal2) (Rickettsia azadi).